We begin with the raw amino-acid sequence, 630 residues long: Conserved oligomeric Golgi complex subunit 6 (630 aa).

This sequence belongs to the COG6 family. Component of the conserved oligomeric Golgi complex which is composed of eight different subunits and is required for normal Golgi morphology and localization.

The protein resides in the golgi apparatus membrane. In terms of biological role, required for normal Golgi function. In Drosophila melanogaster (Fruit fly), this protein is Conserved oligomeric Golgi complex subunit 6.